Consider the following 445-residue polypeptide: Tubulin beta chain (445 aa).

Residues glutamine 11, glutamate 69, serine 138, glycine 142, threonine 143, glycine 144, asparagine 205, and asparagine 227 each contribute to the GTP site. Glutamate 69 is a Mg(2+) binding site.

This sequence belongs to the tubulin family. As to quaternary structure, dimer of alpha and beta chains. A typical microtubule is a hollow water-filled tube with an outer diameter of 25 nm and an inner diameter of 15 nM. Alpha-beta heterodimers associate head-to-tail to form protofilaments running lengthwise along the microtubule wall with the beta-tubulin subunit facing the microtubule plus end conferring a structural polarity. Microtubules usually have 13 protofilaments but different protofilament numbers can be found in some organisms and specialized cells. It depends on Mg(2+) as a cofactor.

It is found in the cytoplasm. Its subcellular location is the cytoskeleton. Functionally, tubulin is the major constituent of microtubules, a cylinder consisting of laterally associated linear protofilaments composed of alpha- and beta-tubulin heterodimers. Microtubules grow by the addition of GTP-tubulin dimers to the microtubule end, where a stabilizing cap forms. Below the cap, tubulin dimers are in GDP-bound state, owing to GTPase activity of alpha-tubulin. The chain is Tubulin beta chain (TUB2) from Ajellomyces capsulatus (Darling's disease fungus).